A 780-amino-acid chain; its full sequence is TSC22 domain family protein 2 (780 aa).

5 disordered regions span residues 20–86 (AQVA…TVSP), 126–158 (TSAPAPGAPGGPQLAGSSAGPVTAAPSQPPTTC), 235–499 (AHGP…PGGP), 587–607 (LVGQVDDTRRKSEPLPQPPLS), and 736–780 (LSSN…VSSA). Residues 28–37 (EDTESLDDPD) show a composition bias toward acidic residues. Over residues 126-146 (TSAPAPGAPGGPQLAGSSAGP) the composition is skewed to low complexity. Residues 241–262 (GTDSSLTAVSQLPPSEKMSQPT) show a composition bias toward polar residues. 3 stretches are compositionally biased toward low complexity: residues 297–316 (GAATGPQPMMAAAQPSQPQG), 344–361 (PAVGAPAAQQPQQFAYPQ), and 395–412 (QPSSTGAAASPATAATLP). Residues 415–434 (TGQNASSVGAQLMGASSQPS) are compositionally biased toward polar residues. Residues 453–468 (QPTGVPPATVGGVVQP) show a composition bias toward low complexity. The segment covering 736 to 756 (LSSNDQLSQLPTQQANPGSTS) has biased composition (polar residues). The span at 765–774 (PPQPTQPPQQ) shows a compositional bias: pro residues.

This sequence belongs to the TSC-22/Dip/Bun family. As to quaternary structure, interacts with NRBP1. Interacts with PKM isoform M2; the interaction results in reduced nuclear levels of PKM isoform M2, leading to repression of cyclin CCND1 transcription and reduced cell growth. Interacts with WDR77.

Reduces the level of nuclear PKM isoform M2 which results in repression of cyclin CCND1 transcription and reduced cell growth. The protein is TSC22 domain family protein 2 of Homo sapiens (Human).